The chain runs to 274 residues: Phosphate import ATP-binding protein PstB (274 aa).

One can recognise an ABC transporter domain in the interval 28–269 (VTVRDLNFYY…PNDRRTQDYI (242 aa)). 60-67 (GPSGCGKS) serves as a coordination point for ATP.

The protein belongs to the ABC transporter superfamily. Phosphate importer (TC 3.A.1.7) family. In terms of assembly, the complex is composed of two ATP-binding proteins (PstB), two transmembrane proteins (PstC and PstA) and a solute-binding protein (PstS).

It is found in the cell inner membrane. The catalysed reaction is phosphate(out) + ATP + H2O = ADP + 2 phosphate(in) + H(+). Part of the ABC transporter complex PstSACB involved in phosphate import. Responsible for energy coupling to the transport system. The sequence is that of Phosphate import ATP-binding protein PstB from Rhodopseudomonas palustris (strain HaA2).